The chain runs to 1879 residues: Genome polyprotein (1879 aa).

The tract at residues 37 to 98 is disordered; sequence GPLDHDSRHG…TSTDVVRSGP (62 aa). The segment covering 38 to 50 has biased composition (basic and acidic residues); that stretch reads PLDHDSRHGRDPV. Polar residues predominate over residues 79 to 93; the sequence is SGTNPSHLKPTSTDV. In terms of domain architecture, SF3 helicase spans 564 to 720; the sequence is DNVISCCTRR…ENWKRENPGK (157 aa). Residue 590 to 597 participates in ATP binding; that stretch reads GPPGCGKT. Tyr1093 carries the O-(5'-phospho-RNA)-tyrosine modification. The region spanning 1188-1341 is the Peptidase C24 domain; it reads GVTHKNAIVS…KLIVPYVKVD (154 aa). Residues His1222, Glu1243, and Cys1305 each act as for 3CLpro activity in the active site. One can recognise a RdRp catalytic domain in the interval 1591–1716; the sequence is HDRYCVDYSK…IVPPLISSVM (126 aa).

In terms of assembly, homodimer. Interacts with NTPase, protein p30 and protease-polymerase p76. Interacts with capsid protein VP1 and protease-polymerase p76. Interacts with host IEF4e; this interaction plays a role in translation of viral proteins. As to quaternary structure, homooligomer. Interacts with Vpg, protein p32 and may interact with capsid protein VP1. Specific enzymatic cleavages in vivo yield mature proteins. Pro-Pol is first autocatalytically cleaved, then processes the whole polyprotein. In terms of processing, VPg is uridylylated by the polymerase and is covalently attached to the 5'-end of the polyadenylated genomic and subgenomic RNAs. This uridylylated form acts as a nucleotide-peptide primer for the polymerase.

Its subcellular location is the host endoplasmic reticulum membrane. The enzyme catalyses a ribonucleoside 5'-triphosphate + H2O = a ribonucleoside 5'-diphosphate + phosphate + H(+). The catalysed reaction is RNA(n) + a ribonucleoside 5'-triphosphate = RNA(n+1) + diphosphate. It catalyses the reaction Endopeptidase with a preference for cleavage when the P1 position is occupied by Glu-|-Xaa and the P1' position is occupied by Gly-|-Yaa.. In terms of biological role, together with NTPase and NS4, initiates the formation of the replication complex. Induces the proliferation of the host smooth ER membranes forming long tubular structures. These remodeled membranes probably form the viral factories that contain the replication complex. Its function is as follows. Displays NTPase activity, but no helicase activity. Induces the formation of convoluted membranes derived from the host ER. These remodeled membranes probably form the viral factories that contain the replication complex. Together with NS2 and NS4, initiates the formation of the replication complex. Functionally, probable key protein responsible for the formation of membrane alterations by the virus. Induces the formation of convoluted membranes derived from the host ER. These remodeled membranes probably form the viral factories that contain the replication complex. Together with NS2 and NTPase, initiates the formation of the replication complex. Viral genome-linked protein is covalently linked to the 5'-end of the positive-strand, negative-strand genomic RNAs and subgenomic RNA. Acts as a genome-linked replication primer. May recruit ribosome to viral RNA thereby promoting viral proteins translation. Interacts with host translation initiation complex to allow the translation of viral proteins. In terms of biological role, protease-polymerase p76 processes the polyprotein: Pro-Pol is first released by autocleavage, then all other proteins are cleaved. Cleaves host translation initiation factor eIF4G1, eIF4G2 and PABP1 thereby inducing a shutdown of host protein synthesis. This shutdown may not prevent viral mRNA from being translated since viral Vpg replaces the cap. Also functions as an RNA-directed RNA polymerase, which replicates genomic and antigenomic viral RNA by recognizing specific signals. Also transcribes a subgenomic mRNA by initiating RNA synthesis internally on antigenomic RNA. This sgRNA codes for structural proteins. Catalyzes the covalent attachment VPg with viral RNAs. The protein is Genome polyprotein of Otariidae (fur seals &amp; sea lions).